Consider the following 407-residue polypeptide: Accessory Sec system protein translocase subunit SecY2 (407 aa).

10 consecutive transmembrane segments (helical) span residues 13 to 33 (FLWT…TLPF), 65 to 85 (FFSI…MFTV), 104 to 124 (MLLT…NLPL), 133 to 153 (GTIV…LIWL), 158 to 178 (SSMG…SYIP), 192 to 212 (PLIL…AVLV), 248 to 268 (IMYA…LLFF), 287 to 307 (IPWF…FAFI), 345 to 365 (FAFV…LLIF), and 370 to 390 (YMRL…VFSI).

The protein belongs to the SecY/SEC61-alpha family. SecY2 subfamily. May form heterotrimers with SecE and SecG subunits (Potential). Component of the accessory SecA2/SecY2 protein translocase complex required to export cell wall protein GspB.

Its subcellular location is the cell membrane. Its function is as follows. The central subunit of a protein translocation channel (Potential). Part of the accessory SecA2/SecY2 system specifically required to export GspB, a serine-rich repeat cell wall protein encoded upstream in the same operon. The protein is Accessory Sec system protein translocase subunit SecY2 of Streptococcus gordonii.